We begin with the raw amino-acid sequence, 209 residues long: Transmembrane domain-containing protein TMIGD3 (209 aa).

The N-terminal stretch at 1–15 is a signal peptide; sequence MEFLLLLSLALFSDA. A helical membrane pass occupies residues 152–172; sequence SILIICILITSLGIIFIISHL. The disordered stretch occupies residues 179 to 201; that stretch reads QRNREVTGKSISRNPQASQGPSM. Over residues 187–201 the composition is skewed to polar residues; that stretch reads KSISRNPQASQGPSM.

It localises to the membrane. The chain is Transmembrane domain-containing protein TMIGD3 (Tmigd3) from Mus musculus (Mouse).